Consider the following 110-residue polypeptide: Nucleoid-associated protein YE3092 (110 aa).

This sequence belongs to the YbaB/EbfC family. In terms of assembly, homodimer.

Its subcellular location is the cytoplasm. The protein resides in the nucleoid. In terms of biological role, binds to DNA and alters its conformation. May be involved in regulation of gene expression, nucleoid organization and DNA protection. The sequence is that of Nucleoid-associated protein YE3092 from Yersinia enterocolitica serotype O:8 / biotype 1B (strain NCTC 13174 / 8081).